Consider the following 379-residue polypeptide: ATP phosphoribosyltransferase regulatory subunit (379 aa).

This sequence belongs to the class-II aminoacyl-tRNA synthetase family. HisZ subfamily. Heteromultimer composed of HisG and HisZ subunits.

The protein localises to the cytoplasm. It functions in the pathway amino-acid biosynthesis; L-histidine biosynthesis; L-histidine from 5-phospho-alpha-D-ribose 1-diphosphate: step 1/9. Its function is as follows. Required for the first step of histidine biosynthesis. May allow the feedback regulation of ATP phosphoribosyltransferase activity by histidine. The sequence is that of ATP phosphoribosyltransferase regulatory subunit from Caldanaerobacter subterraneus subsp. tengcongensis (strain DSM 15242 / JCM 11007 / NBRC 100824 / MB4) (Thermoanaerobacter tengcongensis).